A 543-amino-acid chain; its full sequence is MAKRIIYNENARRALERGIDILAEAVAVTLGPKGRNVVLEKKYGAPQIVNDGVTIAKEIELEDHIENTGVALIRQAASKTNDVAGDGTTTATVLAHAIVKEGLRNVAAGANAILLKRGIDKATNFLVDRIREHARSVEDSKAIAQVGAISAGNDDEVRQMIAEALDKVGKEAVISLEEGKSVTTELEVTEGMRFDKGYISPYFATDPERMEAIFDEPFLAVDDKQIALVQDLVPVLEPVARAGRPLVIIAEDIEKEALATLVVNRLRGVLNVAAVKAPGFGDRRKAMLEDIAILTGGQLITEDAGLKLDNTKLDSLGKARRITITKDSTTIVAEGNDVAVKARVEQIRRQMEETESSYDKGKLQERLAKLSGGVAVVKVGAATETEMKDKKLRLEDAINATKAAVEEGIVPGGGTTLAHLTPELEAWANSTLKDEELTGALIVARALPAPLKRIAENAGQNGAVIAERVKEKEFNVDFNAATNEFVDMFSAGIVDPAKVTRSALQNALSYACMVLTTGTVVDKPEPKDAAPAGVGGGGGDFDY.

ATP-binding positions include 29–32 (TLGP), 86–90 (DGTTT), Gly-413, 479–481 (NAA), and Asp-495. The tract at residues 524 to 543 (PEPKDAAPAGVGGGGGDFDY) is disordered. Positions 533 to 543 (GVGGGGGDFDY) are enriched in gly residues.

It belongs to the chaperonin (HSP60) family. In terms of assembly, forms a cylinder of 14 subunits composed of two heptameric rings stacked back-to-back. Interacts with the co-chaperonin GroES.

It localises to the cytoplasm. The enzyme catalyses ATP + H2O + a folded polypeptide = ADP + phosphate + an unfolded polypeptide.. Functionally, together with its co-chaperonin GroES, plays an essential role in assisting protein folding. The GroEL-GroES system forms a nano-cage that allows encapsulation of the non-native substrate proteins and provides a physical environment optimized to promote and accelerate protein folding. In Anabaena sp. (strain L31), this protein is Chaperonin GroEL 1.